The sequence spans 449 residues: Protein cortex (449 aa).

WD repeat units follow at residues 108–148 (TYSY…ISQG), 149–188 (YAEY…KIDS), 198–237 (NRNC…ISWR), 283–327 (DSDW…VRDT), 345–382 (TGEL…DQWG), and 386–425 (SGLD…KKMK). Positions 386–397 (SGLDRVRTMVFS) match the D-box motif.

Belongs to the WD repeat CORT family.

Its subcellular location is the cytoplasm. Its function is as follows. Controls wing pigmentation patterning by regulating scale cell development, thereby playing a key role in mimicry and crypsis. Probably acts as an activator of the anaphase promoting complex/cyclosome (APC/C) that promotes the ubiquitin ligase activity and substrate specificity of the APC/C. The chain is Protein cortex from Heliconius erato (Crimson patched longwing butterfly).